The chain runs to 169 residues: ATP synthase subunit b (169 aa).

Residues 12–32 (HIYLGNALWYLICFAILLLLI) form a helical membrane-spanning segment.

The protein belongs to the ATPase B chain family. F-type ATPases have 2 components, F(1) - the catalytic core - and F(0) - the membrane proton channel. F(1) has five subunits: alpha(3), beta(3), gamma(1), delta(1), epsilon(1). F(0) has three main subunits: a(1), b(2) and c(10-14). The alpha and beta chains form an alternating ring which encloses part of the gamma chain. F(1) is attached to F(0) by a central stalk formed by the gamma and epsilon chains, while a peripheral stalk is formed by the delta and b chains.

It localises to the cell membrane. Functionally, f(1)F(0) ATP synthase produces ATP from ADP in the presence of a proton or sodium gradient. F-type ATPases consist of two structural domains, F(1) containing the extramembraneous catalytic core and F(0) containing the membrane proton channel, linked together by a central stalk and a peripheral stalk. During catalysis, ATP synthesis in the catalytic domain of F(1) is coupled via a rotary mechanism of the central stalk subunits to proton translocation. In terms of biological role, component of the F(0) channel, it forms part of the peripheral stalk, linking F(1) to F(0). In Lactobacillus helveticus (strain DPC 4571), this protein is ATP synthase subunit b.